Reading from the N-terminus, the 199-residue chain is Probable chemoreceptor glutamine deamidase CheD (199 aa).

The protein belongs to the CheD family.

The catalysed reaction is L-glutaminyl-[protein] + H2O = L-glutamyl-[protein] + NH4(+). Its function is as follows. Probably deamidates glutamine residues to glutamate on methyl-accepting chemotaxis receptors (MCPs), playing an important role in chemotaxis. The chain is Probable chemoreceptor glutamine deamidase CheD from Cereibacter sphaeroides (Rhodobacter sphaeroides).